The chain runs to 261 residues: Proliferating cell nuclear antigen (261 aa).

Residues K14, K77, and K80 each carry the N6-acetyllysine modification. A DNA-binding region spans residues 61 to 80 (RCDRNLAMGVNLTSMSKILK). The cysteines at positions 135 and 162 are disulfide-linked. A Glycyl lysine isopeptide (Lys-Gly) (interchain with G-Cter in SUMO2); alternate cross-link involves residue K164. K164 is covalently cross-linked (Glycyl lysine isopeptide (Lys-Gly) (interchain with G-Cter in ubiquitin); alternate). Phosphotyrosine; by EGFR is present on Y211. N6-acetyllysine is present on K248. A Glycyl lysine isopeptide (Lys-Gly) (interchain with G-Cter in SUMO2) cross-link involves residue K254.

Belongs to the PCNA family. Homotrimer. Interacts with p300/EP300; the interaction occurs on chromatin in UV-irradiated damaged cells. Interacts with CREBBP (via transactivation domain and C-terminus); the interaction occurs on chromatin in UV-irradiated damaged cells. Directly interacts with POLD1, POLD3 and POLD4 subunits of the DNA polymerase delta complex, POLD3 being the major interacting partner; the interaction with POLD3 is inhibited by CDKN1A/p21(CIP1). Forms a complex with activator 1 heteropentamer in the presence of ATP. Interacts with EXO1, POLH, POLK, DNMT1, ERCC5, FEN1, CDC6 and POLDIP2. Interacts with POLB. Interacts with APEX2; this interaction is triggered by reactive oxygen species and increased by misincorporation of uracil in nuclear DNA. Forms a ternary complex with DNTTIP2 and core histone. Interacts with KCTD10. Interacts with PPP1R15A. Interacts with SMARCA5/SNF2H. Interacts with BAZ1B/WSTF; the interaction is direct and is required for BAZ1B/WSTF binding to replication foci during S phase. Interacts with HLTF and SHPRH. Interacts with NUDT15; this interaction is disrupted in response to UV irradiation and acetylation. Interacts with CDKN1A/p21(CIP1) and CDT1; interacts via their PIP-box which also recruits the DCX(DTL) complex. The interaction with CDKN1A inhibits POLD3 binding. Interacts with DDX11. Interacts with EGFR; positively regulates PCNA. Interacts with PARPBP. Interacts (when ubiquitinated) with SPRTN; leading to enhance RAD18-mediated PCNA ubiquitination. Interacts (when polyubiquitinated) with ZRANB3. Interacts with SMARCAD1. Interacts with CDKN1C. Interacts with PCLAF (via PIP-box). Interacts with RTEL1 (via PIP-box); the interaction is direct and essential for the suppression of telomere fragility. Interacts with FAM111A (via PIP-box); the interaction is direct and required for PCNA loading on chromatin binding. Interacts with LIG1. Interacts with SETMAR. Interacts with ANKRD17. Interacts with FBXO18/FBH1 (via PIP-box); the interaction recruits the DCX(DTL) complex and promotes ubiquitination and degradation of FBXO18/FBH1. Interacts with POLN. Interacts with SDE2 (via PIP-box); the interaction is direct and prevents ultraviolet light induced monoubiquitination. Component of the replisome complex composed of at least DONSON, MCM2, MCM7, PCNA and TICRR; interaction at least with PCNA occurs during DNA replication. Interacts with MAPK15; the interaction is chromatin binding dependent and prevents MDM2-mediated PCNA destruction by inhibiting the association of PCNA with MDM2. Interacts with PARP10 (via PIP-box). Interacts with DDI2. Interacts with HMCES (via PIP-box). Interacts with TRAIP (via PIP-box). Interacts with UHRF2. Interacts with ALKBH2; this interaction is enhanced during the S-phase of the cell cycle. Interacts with ATAD5; the interaction promotes USP1-mediated PCNA deubiquitination. Interacts (when phosphorylated) with GRB2. Interacts with ANG. Interacts with nuclear UNG; this interaction mediates UNG recruitment to S-phase replication foci. Interacts with ERCC6L2 (via an atypical PIP-box); this interaction facilitates cenrtomeric localization of ERCC6L2. Phosphorylated. Phosphorylation at Tyr-211 by EGFR stabilizes chromatin-associated PCNA. In terms of processing, acetylated by CREBBP and p300/EP300; preferentially acetylated by CREBBP on Lys-80, Lys-13 and Lys-14 and on Lys-77 by p300/EP300 upon loading on chromatin in response to UV irradiation. Lysine acetylation disrupts association with chromatin, hence promoting PCNA ubiquitination and proteasomal degradation in response to UV damage in a CREBBP- and EP300-dependent manner. Acetylation disrupts interaction with NUDT15 and promotes degradation. Post-translationally, ubiquitinated. Following DNA damage, can be either monoubiquitinated to stimulate direct bypass of DNA lesions by specialized DNA polymerases or polyubiquitinated to promote recombination-dependent DNA synthesis across DNA lesions by template switching mechanisms. Following induction of replication stress, monoubiquitinated by the UBE2B-RAD18 complex on Lys-164, leading to recruit translesion (TLS) polymerases, which are able to synthesize across DNA lesions in a potentially error-prone manner. An error-free pathway also exists and requires non-canonical polyubiquitination on Lys-164 through 'Lys-63' linkage of ubiquitin moieties by the E2 complex UBE2N-UBE2V2 and the E3 ligases, HLTF, RNF8 and SHPRH. This error-free pathway, also known as template switching, employs recombination mechanisms to synthesize across the lesion, using as a template the undamaged, newly synthesized strand of the sister chromatid. Monoubiquitination at Lys-164 also takes place in undamaged proliferating cells, and is mediated by the DCX(DTL) complex, leading to enhance PCNA-dependent translesion DNA synthesis. Sumoylated during S phase. Methylated on glutamate residues by ARMT1.

It localises to the nucleus. Its function is as follows. Auxiliary protein of DNA polymerase delta and epsilon, is involved in the control of eukaryotic DNA replication by increasing the polymerase's processibility during elongation of the leading strand. Induces a robust stimulatory effect on the 3'-5' exonuclease and 3'-phosphodiesterase, but not apurinic-apyrimidinic (AP) endonuclease, APEX2 activities. Has to be loaded onto DNA in order to be able to stimulate APEX2. Plays a key role in DNA damage response (DDR) by being conveniently positioned at the replication fork to coordinate DNA replication with DNA repair and DNA damage tolerance pathways. Acts as a loading platform to recruit DDR proteins that allow completion of DNA replication after DNA damage and promote postreplication repair: Monoubiquitinated PCNA leads to recruitment of translesion (TLS) polymerases, while 'Lys-63'-linked polyubiquitination of PCNA is involved in error-free pathway and employs recombination mechanisms to synthesize across the lesion. The chain is Proliferating cell nuclear antigen (Pcna) from Mus musculus (Mouse).